The sequence spans 115 residues: Tyrosine-protein phosphatase 19 (115 aa).

The Tyrosine-protein phosphatase domain maps to 1–115 (WLMIVEQKCR…ETGSDAPMVV (115 aa)). Position 83 (Asp-83) interacts with substrate.

The protein belongs to the protein-tyrosine phosphatase family.

It catalyses the reaction O-phospho-L-tyrosyl-[protein] + H2O = L-tyrosyl-[protein] + phosphate. The sequence is that of Tyrosine-protein phosphatase 19 (STY-19) from Styela plicata (Wrinkled sea squirt).